We begin with the raw amino-acid sequence, 362 residues long: 3-dehydroquinate synthase (362 aa).

Residues 71 to 76 (DGEQYK), 105 to 109 (GVIGD), 129 to 130 (TT), lysine 142, lysine 151, and 169 to 172 (CLKT) contribute to the NAD(+) site. Zn(2+) contacts are provided by glutamate 184, histidine 247, and histidine 264.

This sequence belongs to the sugar phosphate cyclases superfamily. Dehydroquinate synthase family. The cofactor is Co(2+). Zn(2+) is required as a cofactor. It depends on NAD(+) as a cofactor.

Its subcellular location is the cytoplasm. The catalysed reaction is 7-phospho-2-dehydro-3-deoxy-D-arabino-heptonate = 3-dehydroquinate + phosphate. It participates in metabolic intermediate biosynthesis; chorismate biosynthesis; chorismate from D-erythrose 4-phosphate and phosphoenolpyruvate: step 2/7. Catalyzes the conversion of 3-deoxy-D-arabino-heptulosonate 7-phosphate (DAHP) to dehydroquinate (DHQ). This is 3-dehydroquinate synthase from Salmonella schwarzengrund (strain CVM19633).